Consider the following 302-residue polypeptide: Recombination-associated protein RdgC (302 aa).

This sequence belongs to the RdgC family.

It is found in the cytoplasm. Its subcellular location is the nucleoid. In terms of biological role, may be involved in recombination. The polypeptide is Recombination-associated protein RdgC (Actinobacillus pleuropneumoniae serotype 5b (strain L20)).